A 378-amino-acid polypeptide reads, in one-letter code: Envelope glycoprotein M (378 aa).

Residues 1–16 (MKSSKSDLFIYKTWFK) are Intravirion-facing. The helical transmembrane segment at 17 to 37 (LLVLYFVMFVLSATVPIAASF) threads the bilayer. Residues 38 to 84 (PGLGFPCYYNALVNYSAINLTERNVAKHLTPTLYLEEPEMFAYMTFT) are Virion surface-facing. The chain crosses the membrane as a helical span at residues 85–105 (FLVDCFAAVYYFLGALAIMLA). The Intravirion segment spans residues 106–118 (KRHFVVSLTTLSQ). A helical transmembrane segment spans residues 119 to 139 (WIAMVGTPTLILIGMWRMWTI). Topologically, residues 140–150 (QLFIQTLSYKH) are virion surface. A helical membrane pass occupies residues 151–171 (IYLSAFVYLIHFLLSFLHTQC). Residues 172–210 (YISRNSQLWSLKVLEQGIPPNTLLDTVVFTIKPLLANCQ) are Intravirion-facing. The helical transmembrane segment at 211–231 (LFCLGLEMLVFSLSFMMAIGN) threads the bilayer. The Virion surface segment spans residues 232–239 (SFYVLVSD). Residues 240–260 (IVFGAINLYLALVLFWVLLTE) form a helical membrane-spanning segment. Over 261-268 (LYLVKYMT) the chain is Intravirion. A helical transmembrane segment spans residues 269-289 (FVMGFYLGGLIGCIFLLVPLW). Residues 290–303 (RYEQIFVAANLRSP) are Virion surface-facing. A helical membrane pass occupies residues 304-324 (ILINILVIFFLCTLSALVRLL). At 325-378 (RMTWFSPTKPSYEPIQLKNIKHRRVKLQSPSGPSILEEGSSDEGSEDSEEEEEL) the chain is on the intravirion side. The segment at 347 to 378 (RRVKLQSPSGPSILEEGSSDEGSEDSEEEEEL) is disordered. A compositionally biased stretch (acidic residues) spans 363–378 (GSSDEGSEDSEEEEEL).

This sequence belongs to the herpesviridae glycoprotein M family. As to quaternary structure, interacts (via N-terminus) with gN (via N-terminus). The gM-gN heterodimer forms the gCII complex.

The protein localises to the virion membrane. The protein resides in the host Golgi apparatus. Its subcellular location is the host trans-Golgi network. It is found in the host endosome membrane. It localises to the host nucleus inner membrane. Functionally, envelope glycoprotein important for virion assembly and egress. Plays a role in the correct incorporation of gH-gL into virion membrane. Directs the glycoprotein N (gN) to the host trans-Golgi network. The polypeptide is Envelope glycoprotein M (Equus caballus (Horse)).